The sequence spans 742 residues: MEEGFRDRAAFIRGAKDIAKEVKKHAAKKVVKGLDRVQDEYSRRSYSRFEEEDDDDDFPAPSDGYYRGEGTQDEEEGGASSDATEGHDEDDEIYEGEYQGIPRAESGGKGERMADGAPLAGVRGGLSDGEGPPGGRGEAQRRKEREELAQQYEAILRECGHGRFQWTLYFVLGLALMADGVEVFVVGFVLPSAEKDMCLSDSNKGMLGLIVYLGMMVGAFLWGGLADRLGRRQCLLISLSVNSVFAFFSSFVQGYGTFLFCRLLSGVGIGGSIPIVFSYFSEFLAQEKRGEHLSWLCMFWMIGGVYAAAMAWAIIPHYGWSFQMGSAYQFHSWRVFVLVCAFPSVFAIGALTTQPESPRFFLENGKHDEAWMVLKQVHDTNMRAKGHPERVFSVTHIKTIHQEDELIEIQSDTGTWYQRWGVRALSLGGQVWGNFLSCFGPEYRRITLMMMGVWFTMSFSYYGLTVWFPDMIRHLQAVDYASRTKVFPGERVEHVTFNFTLENQIHRGGQYFNDKFIGLRLKSVSFEDSLFEECYFEDVTSSNTFFRNCTFINTVFYNTDLFEYKFVNSRLINSTFLHNKEGCPLDVTGTGEGAYMVYFVSFLGTLAVLPGNIVSALLMDKIGRLRMLAGSSVMSCVSCFFLSFGNSESAMIALLCLFGGVSIASWNALDVLTVELYPSDKRTTAFGFLNALCKLAAVLGISIFTSFVGITKAAPILFASAALALGSSLALKLPETRGQVLQ.

An interaction with SYT1 region spans residues 1–57; sequence MEEGFRDRAAFIRGAKDIAKEVKKHAAKKVVKGLDRVQDEYSRRSYSRFEEEDDDDD. At 1-169 the chain is on the cytoplasmic side; it reads MEEGFRDRAA…GHGRFQWTLY (169 aa). The segment covering 33-49 has biased composition (basic and acidic residues); the sequence is GLDRVQDEYSRRSYSRF. The interval 33-144 is disordered; it reads GLDRVQDEYS…GRGEAQRRKE (112 aa). A phosphoserine mark is found at Ser-80 and Ser-81. At Thr-84 the chain carries Phosphothreonine. Residues 122 to 137 are compositionally biased toward gly residues; sequence VRGGLSDGEGPPGGRG. Ser-127 is modified (phosphoserine). Residues 170-190 form a helical membrane-spanning segment; that stretch reads FVLGLALMADGVEVFVVGFVL. Topologically, residues 191–205 are extracellular; sequence PSAEKDMCLSDSNKG. A helical membrane pass occupies residues 206–226; sequence MLGLIVYLGMMVGAFLWGGLA. The Cytoplasmic segment spans residues 227–233; it reads DRLGRRQ. A helical transmembrane segment spans residues 234-254; that stretch reads CLLISLSVNSVFAFFSSFVQG. Residues 255–262 lie on the Extracellular side of the membrane; it reads YGTFLFCR. Residues 263-283 traverse the membrane as a helical segment; that stretch reads LLSGVGIGGSIPIVFSYFSEF. Over 284-294 the chain is Cytoplasmic; that stretch reads LAQEKRGEHLS. A helical transmembrane segment spans residues 295-315; that stretch reads WLCMFWMIGGVYAAAMAWAII. Topologically, residues 316–334 are extracellular; the sequence is PHYGWSFQMGSAYQFHSWR. The chain crosses the membrane as a helical span at residues 335-355; that stretch reads VFVLVCAFPSVFAIGALTTQP. Residues 356-447 are Cytoplasmic-facing; that stretch reads ESPRFFLENG…CFGPEYRRIT (92 aa). Residue Ser-393 is modified to Phosphoserine. Residues 448–468 traverse the membrane as a helical segment; that stretch reads LMMMGVWFTMSFSYYGLTVWF. Residues 469–598 are Extracellular-facing; the sequence is PDMIRHLQAV…GTGEGAYMVY (130 aa). Tyr-480 carries the post-translational modification Phosphotyrosine. N-linked (GlcNAc...) asparagine glycans are attached at residues Asn-498, Asn-548, and Asn-573. Residues 599-619 form a helical membrane-spanning segment; the sequence is FVSFLGTLAVLPGNIVSALLM. At 620-626 the chain is on the cytoplasmic side; sequence DKIGRLR. A helical transmembrane segment spans residues 627–647; sequence MLAGSSVMSCVSCFFLSFGNS. The Extracellular portion of the chain corresponds to 648 to 651; sequence ESAM. Residues 652–672 traverse the membrane as a helical segment; that stretch reads IALLCLFGGVSIASWNALDVL. Residues 673-685 lie on the Cytoplasmic side of the membrane; it reads TVELYPSDKRTTA. A helical membrane pass occupies residues 686-708; that stretch reads FGFLNALCKLAAVLGISIFTSFV. At 709 to 712 the chain is on the extracellular side; that stretch reads GITK. Residues 713–731 traverse the membrane as a helical segment; that stretch reads AAPILFASAALALGSSLAL. Residues 732–742 lie on the Cytoplasmic side of the membrane; it reads KLPETRGQVLQ.

The protein belongs to the major facilitator superfamily. Interacts with SYT1/synaptotagmin-1 in a calcium-dependent manner. Binds the adapter protein complex AP-2. As to quaternary structure, (Microbial infection) Interacts with C.botulinum neurotoxin type A2 (BoNT/A, botA). Interaction is improved by glycosylation of SV2. In terms of processing, phosphorylation by CK1 of the N-terminal cytoplasmic domain regulates interaction with SYT1. N-glycosylated.

Its subcellular location is the presynapse. The protein localises to the cytoplasmic vesicle. The protein resides in the secretory vesicle. It localises to the synaptic vesicle membrane. Plays a role in the control of regulated secretion in neural and endocrine cells, enhancing selectively low-frequency neurotransmission. Positively regulates vesicle fusion by maintaining the readily releasable pool of secretory vesicles. Functionally, (Microbial infection) Receptor for the C.botulinum neurotoxin type A2 (BoNT/A, botA); glycosylation is not essential but enhances the interaction. Probably also serves as a receptor for the closely related C.botulinum neurotoxin type A1. The chain is Synaptic vesicle glycoprotein 2A (SV2A) from Homo sapiens (Human).